We begin with the raw amino-acid sequence, 484 residues long: MSLSIVSYYGSQQSKCGYCAGANCSLSHGMHAYQLDCRDYQDLIDRGWRRCGYYCYKLRNQETCCPCYTIKCNGLEFKLSKSNKRILRRINRFLRDGKRESKPEAGDGDGEADADYAIVAPEVTASEPQPQLPDKSPPVINVEQVASLATAQRKPTKQATAAAVEAPTLGSNKSSLLSSSAAAPISNKPCKKAKQMRLDRRLAKLGDSASYSTKSLTQEKTLRDFLNTDSETNKHRLKLRLIHVYDDEFRRTLPQSFALYKKYQISIHNDPPKDQDAYKEHLQATPLQNEKPWDGPEMGYGSFHQQYWLDDKLIAVGVIDILPGCVSSVYFFYDPDYSFLSLGTYGSLREIELVQSLAEKVPSLKYYYMGFYIHSCPKMRYKGKLSPSYLLCPETYEWLPLTDVIRAKLDEHKYQRLNEDPAARDVNEFLMEHLDEVKLLLGGRTRTDYKHFRQLRGTVSDDDIIIEYSKLVGKECARRMLYVK.

The protein belongs to the R-transferase family.

It carries out the reaction an N-terminal L-alpha-aminoacyl-[protein] + L-arginyl-tRNA(Arg) = an N-terminal L-arginyl-L-aminoacyl-[protein] + tRNA(Arg) + H(+). Involved in the post-translational conjugation of arginine to the N-terminal aspartate or glutamate of a protein. This arginylation is required for degradation of the protein via the ubiquitin pathway. Does not arginylate cysteine residues. The sequence is that of Arginyl-tRNA--protein transferase 1 (Ate1) from Drosophila melanogaster (Fruit fly).